The chain runs to 534 residues: Beta-glucosidase 31 (534 aa).

The first 22 residues, 1-22, serve as a signal peptide directing secretion; it reads MAIKLIALVITLCVASWDVAQG. Position 51 (Gln51) interacts with a beta-D-glucoside. Residue Asn68 is glycosylated (N-linked (GlcNAc...) asparagine). A beta-D-glucoside is bound by residues His154 and 199 to 200; that span reads NE. Residue Glu200 is the Proton donor of the active site. The cysteines at positions 219 and 227 are disulfide-linked. Tyr344 is an a beta-D-glucoside binding site. N-linked (GlcNAc...) asparagine glycosylation is present at Asn374. Glu417 provides a ligand contact to a beta-D-glucoside. The active-site Nucleophile is Glu417. A glycan (N-linked (GlcNAc...) asparagine) is linked at Asn425. Residues Trp467, 474 to 475, and Phe483 contribute to the a beta-D-glucoside site; that span reads EW.

This sequence belongs to the glycosyl hydrolase 1 family.

The catalysed reaction is Hydrolysis of terminal, non-reducing beta-D-glucosyl residues with release of beta-D-glucose.. This Arabidopsis thaliana (Mouse-ear cress) protein is Beta-glucosidase 31.